The following is a 301-amino-acid chain: Fructokinase (301 aa).

H165, C181, H184, and C187 together coordinate Zn(2+).

It belongs to the ROK (NagC/XylR) family. Mg(2+) is required as a cofactor.

It catalyses the reaction D-fructose + ATP = D-fructose 6-phosphate + ADP + H(+). Its activity is regulated as follows. Inhibition by zinc ions. The protein is Fructokinase (frk) of Zymomonas mobilis subsp. mobilis (strain ATCC 31821 / ZM4 / CP4).